Reading from the N-terminus, the 349-residue chain is Signal peptidase I (349 aa).

A run of 2 helical transmembrane segments spans residues 3-23 (NLFF…LDYF) and 25-45 (LPNT…VLWC). Topologically, residues 46 to 80 (YHRFVVLPKRHRQVARAEQRSGKTLSEEEKAKIEP) are cytoplasmic. A helical membrane pass occupies residues 81–101 (ISEASEFLSSLFPVLAVVFLV). Residues 102–349 (RSFLFEPFQI…RFERFFTAIK (248 aa)) lie on the Periplasmic side of the membrane. Residues Ser115 and Lys196 contribute to the active site.

The protein belongs to the peptidase S26 family.

It localises to the cell inner membrane. It catalyses the reaction Cleavage of hydrophobic, N-terminal signal or leader sequences from secreted and periplasmic proteins.. The polypeptide is Signal peptidase I (lepB) (Haemophilus influenzae (strain ATCC 51907 / DSM 11121 / KW20 / Rd)).